The chain runs to 339 residues: D-erythrose-4-phosphate dehydrogenase (339 aa).

11 to 12 is an NAD(+) binding site; that stretch reads RI. Substrate-binding positions include 158–160, Arg-204, 217–218, and Arg-240; these read SCT and TK. Cys-159 functions as the Nucleophile in the catalytic mechanism. Asn-322 lines the NAD(+) pocket.

The protein belongs to the glyceraldehyde-3-phosphate dehydrogenase family. Epd subfamily. As to quaternary structure, homotetramer.

It localises to the cytoplasm. It carries out the reaction D-erythrose 4-phosphate + NAD(+) + H2O = 4-phospho-D-erythronate + NADH + 2 H(+). It functions in the pathway cofactor biosynthesis; pyridoxine 5'-phosphate biosynthesis; pyridoxine 5'-phosphate from D-erythrose 4-phosphate: step 1/5. Functionally, catalyzes the NAD-dependent conversion of D-erythrose 4-phosphate to 4-phosphoerythronate. This Aliivibrio fischeri (strain ATCC 700601 / ES114) (Vibrio fischeri) protein is D-erythrose-4-phosphate dehydrogenase.